The sequence spans 900 residues: DNA mismatch repair protein MutS (900 aa).

ATP is bound at residue 637-644 (GPNMAGKS).

Belongs to the DNA mismatch repair MutS family.

In terms of biological role, this protein is involved in the repair of mismatches in DNA. It is possible that it carries out the mismatch recognition step. This protein has a weak ATPase activity. This is DNA mismatch repair protein MutS from Methanosarcina acetivorans (strain ATCC 35395 / DSM 2834 / JCM 12185 / C2A).